A 58-amino-acid chain; its full sequence is UPF0339 protein TDE_0826 (58 aa).

Belongs to the UPF0339 family.

This chain is UPF0339 protein TDE_0826, found in Treponema denticola (strain ATCC 35405 / DSM 14222 / CIP 103919 / JCM 8153 / KCTC 15104).